The chain runs to 252 residues: Fluoroquinolones export permease protein MT2760 (252 aa).

6 consecutive transmembrane segments (helical) span residues V31 to F51, L69 to F89, A119 to L139, I148 to V168, L176 to I196, and T224 to F244.

In terms of assembly, the complex is composed of 2 ATP-binding proteins and 2 transmembrane proteins.

It localises to the cell membrane. In terms of biological role, part of the ABC transporter complex involved in fluoroquinolones export. Probably responsible for the translocation of the substrate across the membrane. The sequence is that of Fluoroquinolones export permease protein MT2760 from Mycobacterium tuberculosis (strain CDC 1551 / Oshkosh).